An 873-amino-acid polypeptide reads, in one-letter code: Valine--tRNA ligase (873 aa).

A 'HIGH' region motif is present at residues 43 to 53 (PNVTGVLHMGH). The 'KMSKS' region motif lies at 532–536 (KMSKS). Residue Lys-535 participates in ATP binding. Residues 802–873 (LGNLINVEEE…IEESIAALTK (72 aa)) are a coiled coil.

It belongs to the class-I aminoacyl-tRNA synthetase family. ValS type 1 subfamily. In terms of assembly, monomer.

The protein resides in the cytoplasm. The enzyme catalyses tRNA(Val) + L-valine + ATP = L-valyl-tRNA(Val) + AMP + diphosphate. Its function is as follows. Catalyzes the attachment of valine to tRNA(Val). As ValRS can inadvertently accommodate and process structurally similar amino acids such as threonine, to avoid such errors, it has a 'posttransfer' editing activity that hydrolyzes mischarged Thr-tRNA(Val) in a tRNA-dependent manner. This Parabacteroides distasonis (strain ATCC 8503 / DSM 20701 / CIP 104284 / JCM 5825 / NCTC 11152) protein is Valine--tRNA ligase.